The following is a 1048-amino-acid chain: [F-actin]-monooxygenase MICAL1 (1048 aa).

The interval 1-489 is monooxygenase domain; sequence MASPASTNPA…QDLYDMMDKE (489 aa). FAD-binding positions include cysteine 95, 114 to 116, 121 to 123, phenylalanine 181, tyrosine 293, and aspartate 393; these read EKR and RHN. Threonine 475 carries the phosphothreonine modification. Residues 488-502 show a composition bias toward basic and acidic residues; the sequence is KEHAQRKSDEPDSRK. The interval 488–508 is disordered; that stretch reads KEHAQRKSDEPDSRKTTTGSA. The 105-residue stretch at 507–611 folds into the Calponin-homology (CH) domain; it reads SAGTEELLHW…YLSHFHSAFK (105 aa). Serine 616 is subject to Phosphoserine. The interval 643–676 is disordered; it reads TRAKVDEETPSTEEPPVSEPSMSPNTPELSEHQE. Over residues 654 to 666 the composition is skewed to low complexity; sequence TEEPPVSEPSMSP. Positions 681-743 constitute an LIM zinc-binding domain; it reads ELCELCGKHL…LQHLPQEDQK (63 aa). Zn(2+) is bound by residues cysteine 683, cysteine 686, histidine 704, cysteine 707, cysteine 710, cysteine 713, cysteine 733, and histidine 736. Disordered stretches follow at residues 741-787, 805-825, and 839-873; these read DQKE…QPAR, IIPDSGAEPPPKPPRSCSDLA, and PVQAPQVPEAIEKGDDEEEEEEEEEEEEEPLPPLE. Over residues 747 to 765 the composition is skewed to polar residues; that stretch reads NNGSLESQELPTPGDSNMQ. The span at 772 to 787 shows a compositional bias: low complexity; that stretch reads PVTRVSPVPSPSQPAR. 2 positions are modified to phosphoserine: serine 777 and serine 781. Coiled coils occupy residues 847-867, 906-949, and 974-1031; these read EAIEKGDDEEEEEEEEEEEEE, EEEM…ESSS, and EEAE…VNQR. Residues 852–868 are compositionally biased toward acidic residues; that stretch reads GDDEEEEEEEEEEEEEP. The region spanning 905 to 1048 is the bMERB domain; the sequence is KEEEMKRFCK…EERRLREMPA (144 aa).

Belongs to the Mical family. As to quaternary structure, associates with the SH3 domain of NEDD9. Interacts with VIM and PLXNA3. Interacts with RAB1B, RAB8A, RAB10, RAB13 and RAB15 (in their GTP-bound forms); binding to RAB1B is of low affinity compared to other Rab proteins; at least in case of RAB8A and RAB10 can bind 2 molecules of the Rab proteins simultaneously. Interacts with STK38 and STK38L. Interacts with GRAF1/ARHGAP26, GRAF2/ARHGAP10, RAB8A, RAB8B and RAB10; may bind simultaneously to GRAFs and Rabs and connects GRAFs to Rabs. Does not interact with RAB1 and RAB11A. It depends on FAD as a cofactor. Expressed in the postnatal and adult hippocampus; found in dentate gyrus, the polymorphic layer, cornu ammonis (CA) 1-3 and in mossy fibers of the striatum lucidum. In adult hippocampus strongly expressed in CA3 pyramidial neurons.

The protein localises to the cytoplasm. It localises to the cytoskeleton. Its subcellular location is the endosome membrane. The protein resides in the midbody. The enzyme catalyses L-methionyl-[F-actin] + NADPH + O2 + H(+) = L-methionyl-(R)-S-oxide-[F-actin] + NADP(+) + H2O. It catalyses the reaction NADPH + O2 + H(+) = H2O2 + NADP(+). In terms of biological role, monooxygenase that promotes depolymerization of F-actin by mediating oxidation of specific methionine residues on actin to form methionine-sulfoxide, resulting in actin filament disassembly and preventing repolymerization. In the absence of actin, it also functions as a NADPH oxidase producing H(2)O(2). Acts as a cytoskeletal regulator that connects NEDD9 to intermediate filaments. Also acts as a negative regulator of apoptosis via its interaction with STK38 and STK38L; acts by antagonizing STK38 and STK38L activation by MST1/STK4. Involved in regulation of lamina-specific connectivity in the nervous system such as the development of lamina-restricted hippocampal connections. Through redox regulation of the actin cytoskeleton controls the intracellular distribution of secretory vesicles containing L1/neurofascin/NgCAM family proteins in neurons, thereby regulating their cell surface levels. May act as Rab effector protein and play a role in vesicle trafficking. Promotes endosomal tubule extension by associating with RAB8 (RAB8A or RAB8B), RAB10 and GRAF (GRAF1/ARHGAP26 or GRAF2/ARHGAP10) on the endosomal membrane which may connect GRAFs to Rabs, thereby participating in neosynthesized Rab8-Rab10-Rab11-dependent protein export. This Mus musculus (Mouse) protein is [F-actin]-monooxygenase MICAL1 (Mical1).